We begin with the raw amino-acid sequence, 125 residues long: Succinate dehydrogenase cytochrome b560 subunit (125 aa).

Helical transmembrane passes span I29–T49, I68–I88, and I104–I124. Heme is bound at residue H83.

It belongs to the cytochrome b560 family. Forms part of complex II containing four subunits: a 70 kDa flavoprotein (FP), a 27 kDa iron-sulfur protein (IP), a cytochrome B and a membrane-anchoring protein. Requires heme as cofactor.

It is found in the mitochondrion inner membrane. It participates in carbohydrate metabolism; tricarboxylic acid cycle. Its function is as follows. Membrane-anchoring subunit of succinate dehydrogenase (SDH) that is involved in complex II of the mitochondrial electron transport chain and is responsible for transferring electrons from succinate to ubiquinone (coenzyme Q). This is Succinate dehydrogenase cytochrome b560 subunit (SDH3) from Porphyra purpurea (Red seaweed).